The chain runs to 178 residues: Methylmalonyl-CoA epimerase, mitochondrial (178 aa).

The N-terminal 38 residues, 1–38 (MRRVVKAAALAAGATGLFSRVQTSVAIGRSFSTPQSQF), are a transit peptide targeting the mitochondrion. The region spanning 49-178 (RLNHVAVAVP…GGVLVELEQA (130 aa)) is the VOC domain. His52 serves as a coordination point for Co(2+). Lys116 carries the post-translational modification N6-succinyllysine. Position 124 (His124) interacts with Co(2+). The residue at position 152 (Lys152) is an N6-acetyllysine; alternate. Lys152 bears the N6-succinyllysine; alternate mark. Glu174 lines the Co(2+) pocket.

It belongs to the methylmalonyl-CoA epimerase family.

It is found in the mitochondrion. It carries out the reaction (R)-methylmalonyl-CoA = (S)-methylmalonyl-CoA. Methylmalonyl-CoA epimerase involved in propionyl-CoA metabolism. In Mus musculus (Mouse), this protein is Methylmalonyl-CoA epimerase, mitochondrial.